A 131-amino-acid chain; its full sequence is uncharacterized protein (131 aa).

Residues 64–81 form a CCHC-type; degenerate zinc finger; sequence VNCDKCGKPGNVKNDCPG.

This is an uncharacterized protein from Homo sapiens (Human).